A 393-amino-acid polypeptide reads, in one-letter code: MRILVLGIDGHLGWPLALRLAKRGHEVIGIDNLSTRRFSEEVGSDSAFPLPQPQERVSEAKKHLGVDITFYVGDITNYGFFKDIVQRYKPDAIVHFAEQRSAPYSMIDMDHAVYTVINNEVSTLRVIQAVLEVDPTIHILKMGTMGEYGTPAFDIPESIYVEAIVNGKKDKIIVPRKAGSVYHWTKVHDTDFLLHFQELYGLTVTDIMQGPVYGTRTEEIVEETLRTRFDFDEVWGTVVNRYCVEAILGLPLTVYGKGGQTRGFISLEDSIQALTLLLENPPKQGEYRVANQFAEIYSVKKIAEFVKKAGEELGLNVEIGSYENPRVEAEEHYYNPERKVLPSLGFYPKKRLPEDVKIMIKDLLPYKTRLERFKHVILPKTKWRKPQYVKRVR.

NAD(+) contacts are provided by residues Asp-31 to Thr-35, Asp-74 to Ile-75, Arg-100, and Asn-118. Residue Arg-100 coordinates substrate. Substrate-binding residues include Thr-144 and Tyr-182. Residue Thr-144 is part of the active site. Residues Tyr-182 and Lys-186 each coordinate NAD(+). Tyr-182 serves as the catalytic Proton acceptor. The active site involves Lys-186. Gln-209 contacts substrate. An NAD(+)-binding site is contributed by Val-212. Residues Val-238 to Arg-241, Thr-253 to Tyr-255, and Arg-326 to Glu-328 each bind substrate.

This sequence belongs to the NAD(P)-dependent epimerase/dehydratase family. NAD(+) is required as a cofactor.

The enzyme catalyses sulfite + UDP-alpha-D-glucose + H(+) = UDP-alpha-D-6-sulfoquinovose + H2O. Functionally, catalyzes the biosynthesis of UDP-sulfoquinovose by the transfer of sulfite to UDP-glucose. Important for the assembly of the S-layer N-glycans. The reaction probably occurs through an NAD(+)-dependent oxidation/dehydration/enolization/sulfite addition process. In vitro, in the absence of sulfite, UDP-D-glucose is converted via UDP-4-keto-D-glucose to UDP-D-glucose-5,6-ene. The sequence is that of UDP-sulfoquinovose synthase from Sulfolobus acidocaldarius (strain ATCC 33909 / DSM 639 / JCM 8929 / NBRC 15157 / NCIMB 11770).